A 442-amino-acid chain; its full sequence is Putative major teichoic acid biosynthesis protein C (442 aa).

In terms of biological role, unknown. Might be involved in poly(glycerol phosphate) teichoic acid biosynthesis. This Bacillus subtilis (strain 168) protein is Putative major teichoic acid biosynthesis protein C (tagC).